The sequence spans 327 residues: Annexin A8 (327 aa).

Annexin repeat units lie at residues 21-92, 93-164, 177-249, and 253-324; these read FNPD…ALMY, PPYR…CLLQ, GLAL…TVVK, and NLHS…SLVG. Residues Met266, Gly268, Gly270, and Asp310 each contribute to the Ca(2+) site.

This sequence belongs to the annexin family.

In terms of biological role, this protein is an anticoagulant protein that acts as an indirect inhibitor of the thromboplastin-specific complex, which is involved in the blood coagulation cascade. The sequence is that of Annexin A8 from Homo sapiens (Human).